Reading from the N-terminus, the 1221-residue chain is Probable serine/threonine-protein kinase DDB_G0286465 (1221 aa).

Disordered regions lie at residues 1–37 (MTLRLDTSLKRGASRNIPPIPTFSSVSNENLSSSPYT), 104–133 (FSPSTGRTKNNNNNNNNNINNNNYKKNDNQ), and 173–263 (ENNS…NNNE). 4 stretches are compositionally biased toward low complexity: residues 24–37 (SSVSNENLSSSPYT), 112–127 (KNNNNNNNNNINNNNY), 173–192 (ENNSQNNNNNKYQINNNMQK), and 204–263 (NNNN…NNNE). The Protein kinase domain occupies 186-627 (INNNMQKTGG…PYKLLDHPFF (442 aa)). 192-200 (KTGGRNGSV) contacts ATP. Lys-271 serves as a coordination point for ATP. The segment covering 324 to 344 (NVNNNNSNNNNNNSNNNITNS) has biased composition (low complexity). A disordered region spans residues 324–346 (NVNNNNSNNNNNNSNNNITNSRY). Residue Asp-448 is the Proton acceptor of the active site. Low complexity-rich tracts occupy residues 538–550 (SPSSSSTTSTSTS) and 559–584 (DSSSSASSSSSSSSSSSSSSSSSLPK). 5 disordered regions span residues 538–604 (SPSS…PEKR), 712–782 (PNLS…KEKL), 823–858 (KFEKKQRQIQDSEKVNKNEEENQTKDDADNISPPLP), 959–1008 (KENI…SYCN), and 1105–1152 (KKQE…QQEK). The segment covering 591–604 (RSKDNQSKLDPEKR) has biased composition (basic and acidic residues). Over residues 725-738 (KKQLQQYQQQQKQQ) the composition is skewed to low complexity. Residues 746-756 (DDEEEKEEEEK) are compositionally biased toward acidic residues. Composition is skewed to basic and acidic residues over residues 757 to 769 (EKEKEKEKEKEKE) and 823 to 850 (KFEKKQRQIQDSEKVNKNEEENQTKDDA). Residues 959–993 (KENIINFHNNNNNNNNNNNNNNNNNNNNNNNNNNN) show a composition bias toward low complexity.

This sequence belongs to the protein kinase superfamily. Ser/Thr protein kinase family.

The catalysed reaction is L-seryl-[protein] + ATP = O-phospho-L-seryl-[protein] + ADP + H(+). It carries out the reaction L-threonyl-[protein] + ATP = O-phospho-L-threonyl-[protein] + ADP + H(+). The polypeptide is Probable serine/threonine-protein kinase DDB_G0286465 (Dictyostelium discoideum (Social amoeba)).